The following is a 267-amino-acid chain: 4-hydroxy-tetrahydrodipicolinate reductase (267 aa).

Residues 12-17, 100-102, and 126-129 each bind NAD(+); these read GPRGRM, GTT, and APNF. His156 acts as the Proton donor/acceptor in catalysis. Residue His157 participates in (S)-2,3,4,5-tetrahydrodipicolinate binding. The active-site Proton donor is Lys160. 166–167 is a (S)-2,3,4,5-tetrahydrodipicolinate binding site; the sequence is GT.

The protein belongs to the DapB family.

The protein localises to the cytoplasm. The enzyme catalyses (S)-2,3,4,5-tetrahydrodipicolinate + NAD(+) + H2O = (2S,4S)-4-hydroxy-2,3,4,5-tetrahydrodipicolinate + NADH + H(+). It catalyses the reaction (S)-2,3,4,5-tetrahydrodipicolinate + NADP(+) + H2O = (2S,4S)-4-hydroxy-2,3,4,5-tetrahydrodipicolinate + NADPH + H(+). The protein operates within amino-acid biosynthesis; L-lysine biosynthesis via DAP pathway; (S)-tetrahydrodipicolinate from L-aspartate: step 4/4. Functionally, catalyzes the conversion of 4-hydroxy-tetrahydrodipicolinate (HTPA) to tetrahydrodipicolinate. The polypeptide is 4-hydroxy-tetrahydrodipicolinate reductase (Bacillus licheniformis (strain ATCC 14580 / DSM 13 / JCM 2505 / CCUG 7422 / NBRC 12200 / NCIMB 9375 / NCTC 10341 / NRRL NRS-1264 / Gibson 46)).